A 326-amino-acid chain; its full sequence is Ficolin-1 (326 aa).

Residues 1–29 (MELSRVAVALGPTGQLLLFLSFQTLAAQA) form the signal peptide. Residues 55–93 (GLPGAAGPKGEAGANGPKGERGSPGVVGKAGPAGPKGDR) form the Collagen-like domain. Low complexity-rich tracts occupy residues 61–71 (GPKGEAGANGP) and 78–89 (PGVVGKAGPAGP). Residues 61–110 (GPKGEAGANGPKGERGSPGVVGKAGPAGPKGDRGEKGARGEKGEPGQLQS) are disordered. Residues 90-104 (KGDRGEKGARGEKGE) show a composition bias toward basic and acidic residues. Residues 109-326 (QSCATGPRTC…QVSEMKVRLT (218 aa)) enclose the Fibrinogen C-terminal domain. 2 disulfide bridges follow: cysteine 111–cysteine 139 and cysteine 118–cysteine 146. The tract at residues 115–154 (PRTCKELLTRGHFLSGWHTIYLPDCQPLTVLCDMDTDGGG) is a domain; contributes to trimerization. Residues 155-243 (WTVFQRRSDG…LVLGGFLEGN (89 aa)) are b domain; contributes to trimerization. 2 residues coordinate Ca(2+): aspartate 262 and aspartate 264. Asparagine 265 is a glycosylation site (N-linked (GlcNAc...) asparagine). An intrachain disulfide couples cysteine 270 to cysteine 283. 282-284 (ACH) provides a ligand contact to a carbohydrate. An N-linked (GlcNAc...) asparagine glycan is attached at asparagine 313. A p domain region spans residues 317–326 (QVSEMKVRLT).

This sequence belongs to the ficolin lectin family. As to quaternary structure, homotrimer. Interacts with elastin/ELN. Interacts (via Fibrinogen C-terminal domain) with FFAR2. Interacts with CRP; may regulate monocyte activation by FCN1. As to expression, most abundantly expressed in placenta and lung.

The protein resides in the secreted. Its subcellular location is the cell membrane. Functionally, extracellular lectin functioning as a pattern-recognition receptor in innate immunity. Binds the sugar moieties of pathogen-associated molecular patterns (PAMPs) displayed on microbes and activates the lectin pathway of the complement system. May also activate monocytes through a G protein-coupled receptor, FFAR2, inducing the secretion of interleukin-8/IL-8. Binds preferentially to 9-O-acetylated 2-6-linked sialic acid derivatives and to various glycans containing sialic acid engaged in a 2-3 linkage. This is Ficolin-1 (FCN1) from Sus scrofa (Pig).